The following is a 38-amino-acid chain: Photosystem II reaction center protein L (38 aa).

A helical membrane pass occupies residues 17 to 37; it reads SLYWGLLLIFVLAVLFSNYFF.

This sequence belongs to the PsbL family. PSII is composed of 1 copy each of membrane proteins PsbA, PsbB, PsbC, PsbD, PsbE, PsbF, PsbH, PsbI, PsbJ, PsbK, PsbL, PsbM, PsbT, PsbX, PsbY, PsbZ, Psb30/Ycf12, at least 3 peripheral proteins of the oxygen-evolving complex and a large number of cofactors. It forms dimeric complexes.

The protein resides in the plastid. It is found in the chloroplast thylakoid membrane. In terms of biological role, one of the components of the core complex of photosystem II (PSII). PSII is a light-driven water:plastoquinone oxidoreductase that uses light energy to abstract electrons from H(2)O, generating O(2) and a proton gradient subsequently used for ATP formation. It consists of a core antenna complex that captures photons, and an electron transfer chain that converts photonic excitation into a charge separation. This subunit is found at the monomer-monomer interface and is required for correct PSII assembly and/or dimerization. The protein is Photosystem II reaction center protein L of Antirrhinum majus (Garden snapdragon).